The primary structure comprises 159 residues: Transcriptional repressor NrdR (159 aa).

Residues 3–34 fold into a zinc finger; sequence CPFCEYNGTRVLDSRPFNHNKSIRRRRECEAC. Positions 49 to 139 constitute an ATP-cone domain; the sequence is LLIVKKDGTR…VYRQFKDINV (91 aa).

This sequence belongs to the NrdR family. Requires Zn(2+) as cofactor.

In terms of biological role, negatively regulates transcription of bacterial ribonucleotide reductase nrd genes and operons by binding to NrdR-boxes. The protein is Transcriptional repressor NrdR of Brevibacillus brevis (strain 47 / JCM 6285 / NBRC 100599).